The chain runs to 550 residues: Hydroxylamine reductase (550 aa).

The [2Fe-2S] cluster site is built by Cys3, Cys6, Cys18, and Cys25. Residues His249, Glu273, Cys317, Cys405, Cys433, Cys458, Glu492, and Lys494 each contribute to the hybrid [4Fe-2O-2S] cluster site. Cys405 is modified (cysteine persulfide).

This sequence belongs to the HCP family. It depends on [2Fe-2S] cluster as a cofactor. Hybrid [4Fe-2O-2S] cluster serves as cofactor.

Its subcellular location is the cytoplasm. The enzyme catalyses A + NH4(+) + H2O = hydroxylamine + AH2 + H(+). Functionally, catalyzes the reduction of hydroxylamine to form NH(3) and H(2)O. This Salmonella paratyphi A (strain ATCC 9150 / SARB42) protein is Hydroxylamine reductase.